A 418-amino-acid polypeptide reads, in one-letter code: Tyrosine--tRNA ligase (418 aa).

L-tyrosine is bound at residue Y34. The 'HIGH' region motif lies at 39-48 (PTGDSMHIGH). Positions 166 and 170 each coordinate L-tyrosine. The short motif at 228 to 232 (KFGKT) is the 'KMSKS' region element. K231 serves as a coordination point for ATP. In terms of domain architecture, S4 RNA-binding spans 350-418 (QNIVLWLVDA…KKRYFLAHVK (69 aa)).

Belongs to the class-I aminoacyl-tRNA synthetase family. TyrS type 1 subfamily. Homodimer.

The protein resides in the cytoplasm. The enzyme catalyses tRNA(Tyr) + L-tyrosine + ATP = L-tyrosyl-tRNA(Tyr) + AMP + diphosphate + H(+). In terms of biological role, catalyzes the attachment of tyrosine to tRNA(Tyr) in a two-step reaction: tyrosine is first activated by ATP to form Tyr-AMP and then transferred to the acceptor end of tRNA(Tyr). The polypeptide is Tyrosine--tRNA ligase (Lactiplantibacillus plantarum (strain ATCC BAA-793 / NCIMB 8826 / WCFS1) (Lactobacillus plantarum)).